A 102-amino-acid chain; its full sequence is Small integral membrane protein 29 (102 aa).

Asn3 carries an N-linked (GlcNAc...) asparagine glycan. The helical transmembrane segment at 21–41 (VLGPFFLITLVGVVVAVVMYV) threads the bilayer.

In terms of tissue distribution, expressed in spleen, thymus, prostate, testis, uterus, small intestine, colon and peripheral blood leukocytes.

It localises to the membrane. The protein is Small integral membrane protein 29 of Homo sapiens (Human).